The sequence spans 204 residues: GATA transcription factor 14 (204 aa).

Over residues 57 to 66 the composition is skewed to basic and acidic residues; sequence REFDTNDSKP. A disordered region spans residues 57-102; sequence REFDTNDSKPSRNFSNLPTATRGRLHAPKRSGNKRGRQKRLSFKSP. Over residues 79–98 the composition is skewed to basic residues; the sequence is GRLHAPKRSGNKRGRQKRLS. A GATA-type zinc finger spans residues 111-165; sequence GITDKSCSHCGTRKTPLWREGPRGAGTLCNACGMRYRTGRLLPEYRPASSPDFKP. The disordered stretch occupies residues 180–204; the sequence is RERKSSPPNSFGFSESYHSTRKLGF. The segment covering 185-196 has biased composition (polar residues); it reads SPPNSFGFSESY.

The protein belongs to the type IV zinc-finger family. Class A subfamily.

It localises to the nucleus. In terms of biological role, transcriptional activator that specifically binds 5'-GATA-3' or 5'-GAT-3' motifs within gene promoters. May be involved in the regulation of some light-responsive genes. This is GATA transcription factor 14 (GATA14) from Arabidopsis thaliana (Mouse-ear cress).